A 538-amino-acid chain; its full sequence is Carboxypeptidase 2 (538 aa).

The signal sequence occupies residues 1–21 (MVAYRFLTLISLGLGSHCASA). An N-linked (GlcNAc...) asparagine glycan is attached at Asn46. Residues 53–76 (PAFTSPGTVPRGFSDGTSGPTRDE) form a disordered region. One can recognise a Peptidase M14 domain in the interval 71–351 (GPTRDETMEG…VMVKSILQTA (281 aa)). His136, Glu139, and His224 together coordinate Zn(2+). Glu322 acts as the Proton donor/acceptor in catalysis. N-linked (GlcNAc...) asparagine glycosylation is found at Asn393 and Asn459.

This sequence belongs to the peptidase M14 family. It depends on Zn(2+) as a cofactor.

It is found in the secreted. Extracellular metalloprotease that contributes to pathogenicity. This is Carboxypeptidase 2 (MCPB) from Trichophyton equinum (Horse ringworm fungus).